Here is a 307-residue protein sequence, read N- to C-terminus: 4-hydroxythreonine-4-phosphate dehydrogenase (307 aa).

2 residues coordinate substrate: histidine 121 and threonine 122. Residues histidine 150, histidine 189, and histidine 245 each contribute to the a divalent metal cation site. Positions 253, 262, and 271 each coordinate substrate.

The protein belongs to the PdxA family. As to quaternary structure, homodimer. The cofactor is Zn(2+). Mg(2+) serves as cofactor. Requires Co(2+) as cofactor.

It is found in the cytoplasm. The enzyme catalyses 4-(phosphooxy)-L-threonine + NAD(+) = 3-amino-2-oxopropyl phosphate + CO2 + NADH. It functions in the pathway cofactor biosynthesis; pyridoxine 5'-phosphate biosynthesis; pyridoxine 5'-phosphate from D-erythrose 4-phosphate: step 4/5. In terms of biological role, catalyzes the NAD(P)-dependent oxidation of 4-(phosphooxy)-L-threonine (HTP) into 2-amino-3-oxo-4-(phosphooxy)butyric acid which spontaneously decarboxylates to form 3-amino-2-oxopropyl phosphate (AHAP). This is 4-hydroxythreonine-4-phosphate dehydrogenase from Sulfurimonas denitrificans (strain ATCC 33889 / DSM 1251) (Thiomicrospira denitrificans (strain ATCC 33889 / DSM 1251)).